The following is a 238-amino-acid chain: Peroxisomal biogenesis factor 11 (238 aa).

Belongs to the peroxin-11 family.

The protein localises to the mitochondrion. The protein resides in the peroxisome membrane. Its function is as follows. Involved in peroxisomal proliferation. Promotes peroxisome division and biogenesis. In Schizosaccharomyces pombe (strain 972 / ATCC 24843) (Fission yeast), this protein is Peroxisomal biogenesis factor 11 (pex11).